A 158-amino-acid polypeptide reads, in one-letter code: NAD(P)H-quinone oxidoreductase subunit J, chloroplastic (158 aa).

The protein belongs to the complex I 30 kDa subunit family. In terms of assembly, NDH is composed of at least 16 different subunits, 5 of which are encoded in the nucleus.

The protein localises to the plastid. The protein resides in the chloroplast thylakoid membrane. The catalysed reaction is a plastoquinone + NADH + (n+1) H(+)(in) = a plastoquinol + NAD(+) + n H(+)(out). The enzyme catalyses a plastoquinone + NADPH + (n+1) H(+)(in) = a plastoquinol + NADP(+) + n H(+)(out). Functionally, NDH shuttles electrons from NAD(P)H:plastoquinone, via FMN and iron-sulfur (Fe-S) centers, to quinones in the photosynthetic chain and possibly in a chloroplast respiratory chain. The immediate electron acceptor for the enzyme in this species is believed to be plastoquinone. Couples the redox reaction to proton translocation, and thus conserves the redox energy in a proton gradient. This chain is NAD(P)H-quinone oxidoreductase subunit J, chloroplastic, found in Coffea arabica (Arabian coffee).